Consider the following 338-residue polypeptide: RNA 3'-terminal phosphate cyclase (338 aa).

Residues Q103 and 283–287 (YLADQ) each bind ATP. H308 functions as the Tele-AMP-histidine intermediate in the catalytic mechanism.

The protein belongs to the RNA 3'-terminal cyclase family. Type 1 subfamily.

The protein localises to the cytoplasm. The catalysed reaction is a 3'-end 3'-phospho-ribonucleotide-RNA + ATP = a 3'-end 2',3'-cyclophospho-ribonucleotide-RNA + AMP + diphosphate. Its function is as follows. Catalyzes the conversion of 3'-phosphate to a 2',3'-cyclic phosphodiester at the end of RNA. The mechanism of action of the enzyme occurs in 3 steps: (A) adenylation of the enzyme by ATP; (B) transfer of adenylate to an RNA-N3'P to produce RNA-N3'PP5'A; (C) and attack of the adjacent 2'-hydroxyl on the 3'-phosphorus in the diester linkage to produce the cyclic end product. The biological role of this enzyme is unknown but it is likely to function in some aspects of cellular RNA processing. The sequence is that of RNA 3'-terminal phosphate cyclase from Escherichia coli O9:H4 (strain HS).